A 525-amino-acid chain; its full sequence is GMP synthase [glutamine-hydrolyzing] (525 aa).

The Glutamine amidotransferase type-1 domain occupies 9–207 (RILILDFGSQ…ILDICGCEAL (199 aa)). Cys86 serves as the catalytic Nucleophile. Catalysis depends on residues His181 and Glu183. The region spanning 208–400 (WTPSKIAEDA…LGLPYDMVYR (193 aa)) is the GMPS ATP-PPase domain. 235-241 (SGGVDSS) is a binding site for ATP.

As to quaternary structure, homodimer.

The enzyme catalyses XMP + L-glutamine + ATP + H2O = GMP + L-glutamate + AMP + diphosphate + 2 H(+). Its pathway is purine metabolism; GMP biosynthesis; GMP from XMP (L-Gln route): step 1/1. Catalyzes the synthesis of GMP from XMP. The polypeptide is GMP synthase [glutamine-hydrolyzing] (Pseudomonas savastanoi pv. phaseolicola (strain 1448A / Race 6) (Pseudomonas syringae pv. phaseolicola (strain 1448A / Race 6))).